The primary structure comprises 292 residues: CCR4-NOT transcription complex subunit 8 (292 aa).

The a divalent metal cation site is built by D40, E42, D161, and D230.

It belongs to the CAF1 family. In terms of assembly, component of the CCR4-NOT complex; distinct complexes seem to exist that differ in the participation of probably mutually exclusive catalytic subunits; the complex contains two deadenylase subunits, CNOT6 or CNOT6L, and CNOT7 or CNOT8. In the complex interacts directly with CNOT1. Interacts with BTG1, BTG2 and TOB1. Interacts with BTG4.

It is found in the cytoplasm. Its subcellular location is the nucleus. It carries out the reaction Exonucleolytic cleavage of poly(A) to 5'-AMP.. Has 3'-5' poly(A) exoribonuclease activity for synthetic poly(A) RNA substrate. Its function seems to be partially redundant with that of CNOT7. Catalytic component of the CCR4-NOT complex which is linked to various cellular processes including bulk mRNA degradation, miRNA-mediated repression, translational repression during translational initiation and general transcription regulation. During miRNA-mediated repression the complex also seems to act as translational repressor during translational initiation. Additional complex functions may be a consequence of its influence on mRNA expression. Associates with members of the BTG family such as TOB1 and BTG2 and is required for their anti-proliferative activity. The chain is CCR4-NOT transcription complex subunit 8 (Cnot8) from Mus musculus (Mouse).